The chain runs to 201 residues: Esterase TesA (201 aa).

The signal sequence occupies residues Met-1–Ala-21. Ser-30 (nucleophile) is an active-site residue. Residues Asp-177 and His-180 contribute to the active site.

It belongs to the 'GDSL' lipolytic enzyme family.

It is found in the secreted. It catalyses the reaction a carboxylic ester + H2O = an alcohol + a carboxylate + H(+). Esterase that exhibits the highest activity towards Tween detergents and p-nitrophenyl esters of short acyl chain length. Also displays a low thioesterase activity towards palmitoyl-coenzyme A, but is not active towards acetyl-coenzyme A. The protein is Esterase TesA (tesA) of Pseudomonas aeruginosa (strain ATCC 15692 / DSM 22644 / CIP 104116 / JCM 14847 / LMG 12228 / 1C / PRS 101 / PAO1).